The following is a 105-amino-acid chain: Host transcription reprogramming factor 7 (105 aa).

A signal peptide spans 1-19; that stretch reads MKTKTIFQLVALFAIGATA. Residues 69–95 form a C2H2-type zinc finger; the sequence is YWCRIGNCNAAFKSLAARCRHEKTAVH.

It is found in the secreted. The protein localises to the host nucleus. In terms of biological role, probable secreted effector that translocates into the nuclei of host cells to reprogram the expression of targeted genes by binding on effector binding elements in rice. The sequence is that of Host transcription reprogramming factor 7 from Pyricularia oryzae (strain 70-15 / ATCC MYA-4617 / FGSC 8958) (Rice blast fungus).